The chain runs to 468 residues: Glutamate--tRNA ligase (468 aa).

The short motif at 12–22 is the 'HIGH' region element; that stretch reads PSPTGMMHIGT. The 'KMSKS' region motif lies at 238–242; sequence KLSKR. Lys241 serves as a coordination point for ATP.

It belongs to the class-I aminoacyl-tRNA synthetase family. Glutamate--tRNA ligase type 1 subfamily. Monomer.

The protein localises to the cytoplasm. The catalysed reaction is tRNA(Glu) + L-glutamate + ATP = L-glutamyl-tRNA(Glu) + AMP + diphosphate. Catalyzes the attachment of glutamate to tRNA(Glu) in a two-step reaction: glutamate is first activated by ATP to form Glu-AMP and then transferred to the acceptor end of tRNA(Glu). In Phenylobacterium zucineum (strain HLK1), this protein is Glutamate--tRNA ligase.